The primary structure comprises 338 residues: RNA 3'-terminal phosphate cyclase (338 aa).

ATP is bound by residues Gln-103 and 283 to 287 (YLADQ). The active-site Tele-AMP-histidine intermediate is the His-308.

Belongs to the RNA 3'-terminal cyclase family. Type 1 subfamily.

It localises to the cytoplasm. The enzyme catalyses a 3'-end 3'-phospho-ribonucleotide-RNA + ATP = a 3'-end 2',3'-cyclophospho-ribonucleotide-RNA + AMP + diphosphate. Functionally, catalyzes the conversion of 3'-phosphate to a 2',3'-cyclic phosphodiester at the end of RNA. The mechanism of action of the enzyme occurs in 3 steps: (A) adenylation of the enzyme by ATP; (B) transfer of adenylate to an RNA-N3'P to produce RNA-N3'PP5'A; (C) and attack of the adjacent 2'-hydroxyl on the 3'-phosphorus in the diester linkage to produce the cyclic end product. The biological role of this enzyme is unknown but it is likely to function in some aspects of cellular RNA processing. In Escherichia coli O81 (strain ED1a), this protein is RNA 3'-terminal phosphate cyclase.